The sequence spans 196 residues: Small ribosomal subunit protein uS4c (196 aa).

The segment covering 1 to 14 (MSRYRGPRLKKIRR) has biased composition (basic residues). The disordered stretch occupies residues 1–43 (MSRYRGPRLKKIRRLGALPGLTRKTPKSGSNPKKKFHSGKKEQ). In terms of domain architecture, S4 RNA-binding spans 89 to 169 (MRLDNILFRL…LPKHLTIDTL (81 aa)).

The protein belongs to the universal ribosomal protein uS4 family. Part of the 30S ribosomal subunit. Contacts protein S5. The interaction surface between S4 and S5 is involved in control of translational fidelity.

The protein resides in the plastid. Its subcellular location is the chloroplast. One of the primary rRNA binding proteins, it binds directly to 16S rRNA where it nucleates assembly of the body of the 30S subunit. Functionally, with S5 and S12 plays an important role in translational accuracy. The chain is Small ribosomal subunit protein uS4c (rps4) from Melica uniflora (Wood melick grass).